We begin with the raw amino-acid sequence, 25 residues long: M-poneritoxin-Na1b (25 aa).

This sequence belongs to the non-disulfide-bridged peptide (NDBP) superfamily. Medium-length antimicrobial peptide (group 3) family. Ponericin-W subfamily. In terms of tissue distribution, expressed by the venom gland.

The protein localises to the secreted. It localises to the target cell membrane. In terms of biological role, membrane-perturbating peptide with multiple activities. It is insecticidal, since it induces reversible paralysis in insects (L.cuprina) after 1 hour, but fails to kill flies. It shows a relatively strong and broad-spectrum antibacterial activity against both Gram-positive and Gram-negative bacteria (MIC&lt;20 uM). It is also anthelmintic, since it potently inhibits the larval development of the major pathogenic nematode of ruminants (H.contortus, IC(50)=2.8 uM). Interestingly, only at 10 uM, it increases adult males motility of the other nematode B.malayi for 24 hours post-treatment, followed by a reduction in motility for the rest of the experiment. It shows cytotoxic activity against HEK293 cells (EC(50)=4-6 uM) and induces hemolysis in human erythrocytes (EC(50)=40-62 uM). In addition, it causes an important increase in intracellular calcium concentration on neuronal and epithelial cell lines, which supports a non-specific membrane perturbation mechanism of action. In vivo, it induces pain by intraplantar injection into mice, suggesting a defensive function against vertebrate predators. In Neoponera apicalis (Ant), this protein is M-poneritoxin-Na1b.